The primary structure comprises 406 residues: Arginine deiminase (406 aa).

The active-site Amidino-cysteine intermediate is the cysteine 396.

Belongs to the arginine deiminase family.

The protein localises to the cytoplasm. It carries out the reaction L-arginine + H2O = L-citrulline + NH4(+). It participates in amino-acid degradation; L-arginine degradation via ADI pathway; carbamoyl phosphate from L-arginine: step 1/2. The protein is Arginine deiminase of Vibrio vulnificus (strain YJ016).